A 402-amino-acid chain; its full sequence is Arginine deiminase (402 aa).

Cys392 serves as the catalytic Amidino-cysteine intermediate.

The protein belongs to the arginine deiminase family.

It is found in the cytoplasm. The enzyme catalyses L-arginine + H2O = L-citrulline + NH4(+). It functions in the pathway amino-acid degradation; L-arginine degradation via ADI pathway; carbamoyl phosphate from L-arginine: step 1/2. This Mycobacterium bovis (strain ATCC BAA-935 / AF2122/97) protein is Arginine deiminase (arcA).